Consider the following 131-residue polypeptide: Small ribosomal subunit protein uS8 (131 aa).

This sequence belongs to the universal ribosomal protein uS8 family. In terms of assembly, part of the 30S ribosomal subunit. Contacts proteins S5 and S12.

Functionally, one of the primary rRNA binding proteins, it binds directly to 16S rRNA central domain where it helps coordinate assembly of the platform of the 30S subunit. The protein is Small ribosomal subunit protein uS8 of Acinetobacter baumannii (strain AB307-0294).